The primary structure comprises 278 residues: Sulfur carrier protein FdhD (278 aa).

The active-site Cysteine persulfide intermediate is the cysteine 124.

The protein belongs to the FdhD family.

The protein resides in the cytoplasm. Functionally, required for formate dehydrogenase (FDH) activity. Acts as a sulfur carrier protein that transfers sulfur from IscS to the molybdenum cofactor prior to its insertion into FDH. In Burkholderia cenocepacia (strain ATCC BAA-245 / DSM 16553 / LMG 16656 / NCTC 13227 / J2315 / CF5610) (Burkholderia cepacia (strain J2315)), this protein is Sulfur carrier protein FdhD.